Reading from the N-terminus, the 185-residue chain is Pectinesterase inhibitor (185 aa).

An N-terminal signal peptide occupies residues 1–32 (MAFSYCSSSLFVSLLLVILFISPLSQRPSVKA). 2 cysteine pairs are disulfide-bonded: cysteine 41–cysteine 50 and cysteine 106–cysteine 146. A propeptide is located at residue lysine 185.

It belongs to the PMEI family. In terms of tissue distribution, fruit.

Its subcellular location is the cytoplasm. Its function is as follows. Inhibits pectin methylesterase; may be involved in the regulation of fruit ripening. The sequence is that of Pectinesterase inhibitor (PMEI) from Actinidia deliciosa (Kiwi).